The following is a 375-amino-acid chain: N5-carboxyaminoimidazole ribonucleotide synthase (375 aa).

ATP contacts are provided by residues arginine 108, lysine 148, 153-159 (GYDGKGQ), 183-186 (EQYL), glutamate 191, histidine 214, and 266-267 (NE). The ATP-grasp domain occupies 112-296 (KQTLLEANTQ…QFDTHILAIT (185 aa)).

The protein belongs to the PurK/PurT family. Homodimer.

The enzyme catalyses 5-amino-1-(5-phospho-beta-D-ribosyl)imidazole + hydrogencarbonate + ATP = 5-carboxyamino-1-(5-phospho-D-ribosyl)imidazole + ADP + phosphate + 2 H(+). The protein operates within purine metabolism; IMP biosynthesis via de novo pathway; 5-amino-1-(5-phospho-D-ribosyl)imidazole-4-carboxylate from 5-amino-1-(5-phospho-D-ribosyl)imidazole (N5-CAIR route): step 1/2. Its function is as follows. Catalyzes the ATP-dependent conversion of 5-aminoimidazole ribonucleotide (AIR) and HCO(3)(-) to N5-carboxyaminoimidazole ribonucleotide (N5-CAIR). The polypeptide is N5-carboxyaminoimidazole ribonucleotide synthase (Staphylococcus epidermidis (strain ATCC 12228 / FDA PCI 1200)).